A 470-amino-acid polypeptide reads, in one-letter code: ATP synthase subunit beta (470 aa).

155 to 162 (GGAGVGKT) provides a ligand contact to ATP.

The protein belongs to the ATPase alpha/beta chains family. F-type ATPases have 2 components, CF(1) - the catalytic core - and CF(0) - the membrane proton channel. CF(1) has five subunits: alpha(3), beta(3), gamma(1), delta(1), epsilon(1). CF(0) has three main subunits: a(1), b(2) and c(9-12). The alpha and beta chains form an alternating ring which encloses part of the gamma chain. CF(1) is attached to CF(0) by a central stalk formed by the gamma and epsilon chains, while a peripheral stalk is formed by the delta and b chains.

It is found in the cell membrane. The catalysed reaction is ATP + H2O + 4 H(+)(in) = ADP + phosphate + 5 H(+)(out). Functionally, produces ATP from ADP in the presence of a proton gradient across the membrane. The catalytic sites are hosted primarily by the beta subunits. The chain is ATP synthase subunit beta from Pectinatus frisingensis.